The primary structure comprises 488 residues: Probable apyrase 5 (488 aa).

A disordered region spans residues 1 to 26 (MDALKVQILPDNQSSPSSTHMLTKPK). The Cytoplasmic portion of the chain corresponds to 1–32 (MDALKVQILPDNQSSPSSTHMLTKPKSKKATK). A compositionally biased stretch (polar residues) spans 10 to 21 (PDNQSSPSSTHM). A helical; Signal-anchor for type II membrane protein membrane pass occupies residues 33–53 (SIAMLIVASLAITLGLLFVFS). The Extracellular portion of the chain corresponds to 54–488 (SNSVMFSASF…GKSRKMIGFK (435 aa)). 73-83 (VIIDAGSSGTR) provides a ligand contact to ATP. Glutamate 196 (proton acceptor) is an active-site residue. Position 220 to 230 (220 to 230 (GIVELGGASAQ)) interacts with ATP. A glycan (N-linked (GlcNAc...) asparagine) is linked at asparagine 251.

The protein belongs to the GDA1/CD39 NTPase family. It depends on Ca(2+) as a cofactor. In terms of tissue distribution, highly expressed in young rosette leaves but only weakly in roots.

It is found in the membrane. It carries out the reaction a ribonucleoside 5'-triphosphate + 2 H2O = a ribonucleoside 5'-phosphate + 2 phosphate + 2 H(+). In terms of biological role, catalyzes the hydrolysis of phosphoanhydride bonds of nucleoside tri- and di-phosphates. The sequence is that of Probable apyrase 5 (APY5) from Arabidopsis thaliana (Mouse-ear cress).